The following is a 1019-amino-acid chain: Pleckstrin homology domain-containing family M member 2 (1019 aa).

Met1 carries the post-translational modification N-acetylmethionine. The segment at 1-310 is interaction with KIF5B; sequence MEPGEVKDRI…LDPPDACTEL (310 aa). Residues 36 to 158 enclose the RUN domain; the sequence is RNHDKVLQRL…IRFELDLDAP (123 aa). Disordered stretches follow at residues 230-458, 471-525, and 557-581; these read SVPS…SEGL, SPST…REAQ, and QPSPCLSSAEDSGVDEGQGSPSEMV. Composition is skewed to polar residues over residues 243–272 and 279–291; these read DTVSGPRSTASDLTSSKASTRSPTQRQNPF and TVSSSDTTPVHTT. Over residues 315 to 327 the composition is skewed to basic residues; sequence VTKKKKIGKKKKS. Over residues 417–427 the composition is skewed to polar residues; it reads LNGQLDPSTWC. The residue at position 441 (Ser441) is a Phosphoserine. Residues 516–525 are compositionally biased toward basic and acidic residues; sequence PLEDTTREAQ. Residues 762 to 885 are interaction with sifA; the sequence is PCHCSPPEGT…VIPQGVAPSP (124 aa). Residues 771 to 873 enclose the PH domain; the sequence is TITKEGMLHY…WMQHLCQAVS (103 aa).

In terms of assembly, interacts with KLC2 (via TPR repeats). Interacts with KIF5B. Interacts with BORCS5. Interacts (via RUN domain) with ARL8B (GTP-bound form); PLEKHM1 and PLEKHM2 compete for interaction with ARL8B. Interacts with ARL8A. As to quaternary structure, (Microbial infection) Interacts with the S.typhimurium sifA protein; required for S.typhimurium infection.

It localises to the cytoplasm. The protein localises to the lysosome membrane. In terms of biological role, plays a role in lysosomes movement and localization at the cell periphery acting as an effector of ARL8B. Required for ARL8B to exert its effects on lysosome location, recruits kinesin-1 to lysosomes and hence direct their movement toward microtubule plus ends. Binding to ARL8B provides a link from lysosomal membranes to plus-end-directed motility. Critical factor involved in NK cell-mediated cytotoxicity. Drives the polarization of cytolytic granules and microtubule-organizing centers (MTOCs) toward the immune synapse between effector NK lymphocytes and target cells. Required for maintenance of the Golgi apparatus organization. May play a role in membrane tubulation. This Homo sapiens (Human) protein is Pleckstrin homology domain-containing family M member 2.